The primary structure comprises 320 residues: 4-diphosphocytidyl-2-C-methyl-D-erythritol kinase (320 aa).

Lys-26 is an active-site residue. 111 to 121 (PVAGGMAGGSA) serves as a coordination point for ATP. Asp-153 is an active-site residue.

It belongs to the GHMP kinase family. IspE subfamily.

It catalyses the reaction 4-CDP-2-C-methyl-D-erythritol + ATP = 4-CDP-2-C-methyl-D-erythritol 2-phosphate + ADP + H(+). It functions in the pathway isoprenoid biosynthesis; isopentenyl diphosphate biosynthesis via DXP pathway; isopentenyl diphosphate from 1-deoxy-D-xylulose 5-phosphate: step 3/6. In terms of biological role, catalyzes the phosphorylation of the position 2 hydroxy group of 4-diphosphocytidyl-2C-methyl-D-erythritol. The sequence is that of 4-diphosphocytidyl-2-C-methyl-D-erythritol kinase from Mycobacterium marinum (strain ATCC BAA-535 / M).